The sequence spans 161 residues: Endoribonuclease YbeY (161 aa).

The Zn(2+) site is built by histidine 120, histidine 124, and aspartate 130.

The protein belongs to the endoribonuclease YbeY family. Zn(2+) is required as a cofactor.

It localises to the cytoplasm. Its function is as follows. Single strand-specific metallo-endoribonuclease involved in late-stage 70S ribosome quality control and in maturation of the 3' terminus of the 16S rRNA. This chain is Endoribonuclease YbeY, found in Chlamydia trachomatis serovar A (strain ATCC VR-571B / DSM 19440 / HAR-13).